We begin with the raw amino-acid sequence, 339 residues long: MLKRLLSKCAEGKTLTEEEAYEAMATVMDGAATDSQIASLLSMLCLRGETVDELTGFVRAMRDRMMAIDAGDDVIDTCGTGGDGAATFNISTAAAIVISSLGVKVAKHGNRAVSSKSGSADVLERLGINIQSSPDAAKEALETNGLTFLYAPLYHTAMKHAAGPRKEIGFRTVFNLIGPLANPARCKRQVVGVYSTRYAEKLAETMRRLGSEHVLFVTGRDGLDECSIATETDVVELKDGAIRRFVITPEEVGLPRGELADVQVHNPEESAALLEAVMTVTAPESAVNIVALNAGVALYAAGKTKTIADGVTMAKDAILSNAAYRQLQRLRAKEVVRDA.

Residues G79, 82–83 (GD), T87, 89–92 (NIST), 107–115 (KHGNRAVSS), and S119 each bind 5-phospho-alpha-D-ribose 1-diphosphate. G79 contacts anthranilate. S91 serves as a coordination point for Mg(2+). Residue N110 coordinates anthranilate. Anthranilate is bound at residue R165. Positions 224 and 225 each coordinate Mg(2+).

Belongs to the anthranilate phosphoribosyltransferase family. In terms of assembly, homodimer. The cofactor is Mg(2+).

The enzyme catalyses N-(5-phospho-beta-D-ribosyl)anthranilate + diphosphate = 5-phospho-alpha-D-ribose 1-diphosphate + anthranilate. It functions in the pathway amino-acid biosynthesis; L-tryptophan biosynthesis; L-tryptophan from chorismate: step 2/5. Catalyzes the transfer of the phosphoribosyl group of 5-phosphorylribose-1-pyrophosphate (PRPP) to anthranilate to yield N-(5'-phosphoribosyl)-anthranilate (PRA). The chain is Anthranilate phosphoribosyltransferase from Geobacillus thermodenitrificans (strain NG80-2).